The following is a 732-amino-acid chain: TIR domain-containing adapter molecule 1 (732 aa).

Positions 1 to 153 (MDNPGPSLRG…CSSDIKGDPS (153 aa)) are TRIF-NTD. The TRAF6-binding signature appears at 84-91 (EGPEEPPD). The interval 144–191 (CSSDIKGDPSGFQPLHSHQGSLQPPSASPAVTRSQPRPIDTPDWSWGH) is disordered. The span at 159–178 (HSHQGSLQPPSASPAVTRSQ) shows a compositional bias: polar residues. The short motif at 206–209 (LEIS) is the pLxIS motif element. Serine 209 is subject to Phosphoserine. Residue lysine 228 forms a Glycyl lysine isopeptide (Lys-Gly) (interchain with G-Cter in ubiquitin) linkage. 2 short sequence motifs (TRAF6-binding) span residues 247–254 (QEPEEISW) and 296–306 (HCPIECTELST). Over residues 305 to 331 (STNSRSPLTSTTESVGKQWPITSQRSP) the composition is skewed to polar residues. The segment at 305 to 389 (STNSRSPLTS…TSTSPVLDHS (85 aa)) is disordered. Residues 345–359 (SSSPPAQPPSLQASP) are compositionally biased toward low complexity. Residues 395 to 534 (KFYNFVVIHA…KVANTFKTQK (140 aa)) enclose the TIR domain. The sufficient to induce apoptosis stretch occupies residues 514-713 (WLDEHSPIFA…SSDDKTECSE (200 aa)). Disordered stretches follow at residues 603 to 679 (TPSW…GPQP) and 696 to 732 (MWGH…ETPE). Composition is skewed to pro residues over residues 604–615 (PSWPGCPQPIPS) and 625–657 (PYSP…PPVS). The segment covering 658–671 (SPQSQSFPSASSPA) has biased composition (low complexity).

Homodimer. Found in a multi-helicase-TICAM1 complex at least composed of DHX36, DDX1, DDX21 and TICAM1; this complex exists in resting cells with or without poly(I:C) RNA ligand stimulation. Interacts (via TIR domain) with DDX21 (via C-terminus). Interacts (via TIR domain) with DHX36 (via C-terminus). Interacts with AZI2 and IRF7. Interacts (when phosphorylated) with IRF3; following activation and phosphorylation on the pLxIS motif by TBK1, recruits IRF3. Interacts with TICAM2 in TLR4 recruitment. Interaction with PIAS4 inhibits the TICAM1-induced NF-kappa-B, IRF and IFNB1 activation. Interacts with IKBKB and IKBKE. Interaction with SARM1 blocks TICAM1-dependent transcription factor activation. Interacts with TRAF3. Interacts with TRAFD1. Interacts with UBQLN1 (via UBA domain). Interacts with TBK1, TRAF6 and RIPK1 and these interactions are enhanced in the presence of WDFY1. Interacts (via the TIR domain) with TLR3 in response to poly(I:C) and this interaction is enhanced in the presence of WDFY1. Interacts with TLR4 in response to poly(I:C) in a WDFY1-dependent manner. Interacts with WDFY1 in response to poly(I:C). Interacts with TRIM56. Interacts (via the TIR domain) with TLR5. Interacts with TRIM8. Interacts with TAX1BP1 and TRIM32; these interactions target TICAM1 to TAX1BP1-mediated selective autophagic degradation. Interacts with DDX50. In terms of processing, phosphorylated by TBK1. Following activation, phosphorylated by TBK1 at Ser-209 in the pLxIS motif. The phosphorylated pLxIS motif constitutes an IRF3-binding motif, leading to recruitment of the transcription factor IRF3 to induce type-I interferons and other cytokines. Post-translationally, polyubiquitinated at Lys-228 by TRIM38 with 'Lys-48'-linked chains, leading to proteasomal degradation. Polyubiquitinated with 'Lys-6'- and 'Lys-33'-linked chains in a TRIM8-dependent manner; ubiquitination disrupts the interaction with TBK1 and subsequent interferon production.

It is found in the cytoplasm. Its subcellular location is the cytosol. The protein localises to the cytoplasmic vesicle. The protein resides in the autophagosome. It localises to the mitochondrion. Its function is as follows. Involved in innate immunity against invading pathogens. Adapter used by TLR3, TLR4 (through TICAM2) and TLR5 to mediate NF-kappa-B and interferon-regulatory factor (IRF) activation, and to induce apoptosis. Ligand binding to these receptors results in TRIF recruitment through its TIR domain. Distinct protein-interaction motifs allow recruitment of the effector proteins TBK1, TRAF6 and RIPK1, which in turn, lead to the activation of transcription factors IRF3 and IRF7, NF-kappa-B and FADD respectively. Phosphorylation by TBK1 on the pLxIS motif leads to recruitment and subsequent activation of the transcription factor IRF3 to induce expression of type I interferon and exert a potent immunity against invading pathogens. Component of a multi-helicase-TICAM1 complex that acts as a cytoplasmic sensor of viral double-stranded RNA (dsRNA) and plays a role in the activation of a cascade of antiviral responses including the induction of pro-inflammatory cytokines. The chain is TIR domain-containing adapter molecule 1 (Ticam1) from Mus musculus (Mouse).